A 136-amino-acid polypeptide reads, in one-letter code: MFQSLIAIDYGKARIGIASGQMITKTATPIGTVEAYDGVPNWIELDKIIKRWNPSDIIIGLPLDTQNFETDITKSAKDFAKEVQQRYQRKVHLINEAYSTREARWRLEEVKSKKVSHIKVDALAACVILETWMSEN.

It belongs to the YqgF nuclease family.

Its subcellular location is the cytoplasm. In terms of biological role, could be a nuclease involved in processing of the 5'-end of pre-16S rRNA. The protein is Putative pre-16S rRNA nuclease of Francisella tularensis subsp. holarctica (strain FTNF002-00 / FTA).